The sequence spans 167 residues: Small ribosomal subunit protein uS5 (167 aa).

The S5 DRBM domain maps to 12–75; that stretch reads LEERVVTINR…EDAKKNMVLV (64 aa).

The protein belongs to the universal ribosomal protein uS5 family. In terms of assembly, part of the 30S ribosomal subunit. Contacts proteins S4 and S8.

In terms of biological role, with S4 and S12 plays an important role in translational accuracy. Its function is as follows. Located at the back of the 30S subunit body where it stabilizes the conformation of the head with respect to the body. This is Small ribosomal subunit protein uS5 from Listeria monocytogenes serotype 4b (strain F2365).